The following is a 62-amino-acid chain: Potassium channel toxin alpha-KTx 10.1 (62 aa).

An N-terminal signal peptide occupies residues 1-22 (MEGIAKITLILLFLFVTMHTFA). Residues 23–28 (NWNTEA) constitute a propeptide that is removed on maturation. 3 cysteine pairs are disulfide-bonded: Cys-31/Cys-50, Cys-36/Cys-55, and Cys-40/Cys-57. At Tyr-60 the chain carries Tyrosine amide.

It belongs to the short scorpion toxin superfamily. Potassium channel inhibitor family. Alpha-KTx 10 subfamily. Expressed by the venom gland.

Its subcellular location is the secreted. Blocks Shaker B (Sh) and voltage-gated potassium-channels Kv1.1/KCNA1, Kv1.2/KCNA2, Kv1.3/KCNA3. Also inhibits small conductance calcium-activated potassium channels (KCNN) and intermediate conductance calcium-activated potassium channel (KCa3.1/KCNN4). In Centruroides noxius (Mexican scorpion), this protein is Potassium channel toxin alpha-KTx 10.1.